We begin with the raw amino-acid sequence, 429 residues long: Enolase (429 aa).

(2R)-2-phosphoglycerate is bound at residue Q162. Residue E204 is the Proton donor of the active site. D241, E283, and D310 together coordinate Mg(2+). The (2R)-2-phosphoglycerate site is built by K335, R364, S365, and K386. The Proton acceptor role is filled by K335.

It belongs to the enolase family. The cofactor is Mg(2+).

Its subcellular location is the cytoplasm. The protein resides in the secreted. It is found in the cell surface. The catalysed reaction is (2R)-2-phosphoglycerate = phosphoenolpyruvate + H2O. Its pathway is carbohydrate degradation; glycolysis; pyruvate from D-glyceraldehyde 3-phosphate: step 4/5. Its function is as follows. Catalyzes the reversible conversion of 2-phosphoglycerate (2-PG) into phosphoenolpyruvate (PEP). It is essential for the degradation of carbohydrates via glycolysis. The polypeptide is Enolase (Mycobacterium avium (strain 104)).